A 276-amino-acid chain; its full sequence is NAD-capped RNA hydrolase NudC (276 aa).

R82 lines the substrate pocket. Residues C112 and C115 each contribute to the Zn(2+) site. E125 is a binding site for substrate. Residues C130 and C133 each coordinate Zn(2+). A substrate-binding site is contributed by Y138. The region spanning 139 to 262 (PRISPSMIVL…SIARYLIDLY (124 aa)) is the Nudix hydrolase domain. A172, E188, and E192 together coordinate a divalent metal cation. A Nudix box motif is present at residues 173–194 (GFAEPGESAEDCLVREVREEVA). Residue 206–213 (QCWPFPHS) coordinates substrate. E233 is an a divalent metal cation binding site. A substrate-binding site is contributed by A255.

This sequence belongs to the Nudix hydrolase family. NudC subfamily. As to quaternary structure, homodimer. Mg(2+) is required as a cofactor. The cofactor is Mn(2+). It depends on Zn(2+) as a cofactor.

The enzyme catalyses a 5'-end NAD(+)-phospho-ribonucleoside in mRNA + H2O = a 5'-end phospho-adenosine-phospho-ribonucleoside in mRNA + beta-nicotinamide D-ribonucleotide + 2 H(+). It carries out the reaction NAD(+) + H2O = beta-nicotinamide D-ribonucleotide + AMP + 2 H(+). The catalysed reaction is NADH + H2O = reduced beta-nicotinamide D-ribonucleotide + AMP + 2 H(+). Functionally, mRNA decapping enzyme that specifically removes the nicotinamide adenine dinucleotide (NAD) cap from a subset of mRNAs by hydrolyzing the diphosphate linkage to produce nicotinamide mononucleotide (NMN) and 5' monophosphate mRNA. The NAD-cap is present at the 5'-end of some mRNAs and stabilizes RNA against 5'-processing. Has preference for mRNAs with a 5'-end purine. Catalyzes the hydrolysis of a broad range of dinucleotide pyrophosphates. The polypeptide is NAD-capped RNA hydrolase NudC (Pseudomonas putida (strain W619)).